Reading from the N-terminus, the 404-residue chain is L-cysteine:1D-myo-inositol 2-amino-2-deoxy-alpha-D-glucopyranoside ligase 1 (404 aa).

Cys47 contributes to the Zn(2+) binding site. Residues 47–50 (CGIT), Thr62, and 85–87 (NIT) each bind L-cysteinyl-5'-AMP. The short motif at 49 to 59 (ITPYDSTHLGH) is the 'HIGH' region element. The short motif at 188–193 (ERGGDP) is the 'ERGGDP' region element. Trp228 contributes to the L-cysteinyl-5'-AMP binding site. Cys232 provides a ligand contact to Zn(2+). 250-252 (GSD) contacts L-cysteinyl-5'-AMP. Zn(2+) is bound at residue His257. Ile284 is a binding site for L-cysteinyl-5'-AMP. The 'KMSKS' region signature appears at 290 to 294 (KMSKS).

The protein belongs to the class-I aminoacyl-tRNA synthetase family. MshC subfamily. In terms of assembly, monomer. Zn(2+) serves as cofactor.

The catalysed reaction is 1D-myo-inositol 2-amino-2-deoxy-alpha-D-glucopyranoside + L-cysteine + ATP = 1D-myo-inositol 2-(L-cysteinylamino)-2-deoxy-alpha-D-glucopyranoside + AMP + diphosphate + H(+). Its function is as follows. Catalyzes the ATP-dependent condensation of GlcN-Ins and L-cysteine to form L-Cys-GlcN-Ins. This chain is L-cysteine:1D-myo-inositol 2-amino-2-deoxy-alpha-D-glucopyranoside ligase 1, found in Corynebacterium jeikeium (strain K411).